A 241-amino-acid polypeptide reads, in one-letter code: MYSMRVVIEETDVTIRADSKESVSSAAKAVKLHRSELDRYVAKDPAFVTAKVPVRTLEGAPEVAKLMSRAAEPFGVGPMAAVAGAIAELAARASEPTVIVDNGGDVQVRARRSVVVGLYVSDDHPLSGRIGFEIEGVLGVCTSSGKFGHSYSAGKADAVTVFAERASLADAAATAICNLTSGDDPEAAVQRALEFADDFTGDLIEAAVVIRGDFVGISGRPPKIVSLRGGRIKPARLEPTI.

It belongs to the UPF0280 family.

This chain is UPF0280 protein MK0206, found in Methanopyrus kandleri (strain AV19 / DSM 6324 / JCM 9639 / NBRC 100938).